The following is a 680-amino-acid chain: Chondroitin proteoglycan 4 (680 aa).

A signal peptide spans 1–18 (MLRVNLLILLCFVPFSLN). N-linked (GlcNAc...) asparagine glycosylation is found at N42, N59, N72, N167, N205, N458, N472, N486, N498, N526, N527, N556, and N604. The segment at 460-680 (TKKAETTKKS…PLTTTLHELY (221 aa)) is disordered. The segment covering 484-500 (AANTTAETTKTTSANIT) has biased composition (low complexity). Residues 520-530 (SLDTSGNNSTV) are compositionally biased toward polar residues. Low complexity-rich tracts occupy residues 633–647 (GEAS…SGEV) and 654–669 (SGYS…SSGE). 2 O-linked (Xyl...) (chondroitin sulfate) serine glycosylation sites follow: S640 and S644. N-linked (GlcNAc...) asparagine glycosylation occurs at N664.

This Caenorhabditis briggsae protein is Chondroitin proteoglycan 4 (cpg-4).